Consider the following 122-residue polypeptide: Large ribosomal subunit protein bL12 (122 aa).

Belongs to the bacterial ribosomal protein bL12 family. Homodimer. Part of the ribosomal stalk of the 50S ribosomal subunit. Forms a multimeric L10(L12)X complex, where L10 forms an elongated spine to which 2 to 4 L12 dimers bind in a sequential fashion. Binds GTP-bound translation factors.

Its function is as follows. Forms part of the ribosomal stalk which helps the ribosome interact with GTP-bound translation factors. Is thus essential for accurate translation. The sequence is that of Large ribosomal subunit protein bL12 from Clostridium botulinum (strain Langeland / NCTC 10281 / Type F).